The primary structure comprises 256 residues: Type III pantothenate kinase (256 aa).

ATP is bound at residue 6 to 13; it reads DIGNTNIV. 107–110 lines the substrate pocket; the sequence is GADI. The active-site Proton acceptor is Asp109. A K(+)-binding site is contributed by Asp129. Thr132 serves as a coordination point for ATP. Position 184 (Thr184) interacts with substrate.

This sequence belongs to the type III pantothenate kinase family. As to quaternary structure, homodimer. Requires NH4(+) as cofactor. It depends on K(+) as a cofactor.

The protein localises to the cytoplasm. It catalyses the reaction (R)-pantothenate + ATP = (R)-4'-phosphopantothenate + ADP + H(+). It participates in cofactor biosynthesis; coenzyme A biosynthesis; CoA from (R)-pantothenate: step 1/5. Catalyzes the phosphorylation of pantothenate (Pan), the first step in CoA biosynthesis. The sequence is that of Type III pantothenate kinase from Bifidobacterium longum (strain DJO10A).